Reading from the N-terminus, the 888-residue chain is Probable disease resistance protein At5g63020 (888 aa).

Positions 22–66 (LNRNGDYIHGLEENLTALQRALEQIEQRREDLLRKILSEERRGLQ) form a coiled coil. One can recognise an NB-ARC domain in the interval 139–442 (AERVDAARVE…GEGFIDRNKG (304 aa)). 181–188 (GMGGVGKT) is a binding site for ATP. LRR repeat units follow at residues 512 to 533 (VARRVSLMFNNIESIRDAPESP), 534 to 555 (QLITLLLRKNFLGHISSSFFRL), 558 to 580 (MLVVLDLSMNRDLRHLPNEISEC), 582 to 604 (SLQYLSLSRTRIRIWPAGLVELR), and 605 to 627 (KLLYLNLEYTRMVESICGISGLT).

This sequence belongs to the disease resistance NB-LRR family.

Its function is as follows. Probable disease resistance protein. This is Probable disease resistance protein At5g63020 from Arabidopsis thaliana (Mouse-ear cress).